Consider the following 223-residue polypeptide: Ribose-5-phosphate isomerase A (223 aa).

Substrate-binding positions include 29-32 (TGST), 82-85 (DGAD), and 95-98 (KGGG). Catalysis depends on Glu104, which acts as the Proton acceptor. Lys122 serves as a coordination point for substrate.

The protein belongs to the ribose 5-phosphate isomerase family. As to quaternary structure, homodimer.

It carries out the reaction aldehydo-D-ribose 5-phosphate = D-ribulose 5-phosphate. Its pathway is carbohydrate degradation; pentose phosphate pathway; D-ribose 5-phosphate from D-ribulose 5-phosphate (non-oxidative stage): step 1/1. Functionally, catalyzes the reversible conversion of ribose-5-phosphate to ribulose 5-phosphate. This is Ribose-5-phosphate isomerase A from Neisseria gonorrhoeae (strain ATCC 700825 / FA 1090).